The sequence spans 337 residues: HTH-type transcriptional regulator MalR (337 aa).

The 56-residue stretch at methionine 1–threonine 56 folds into the HTH lacI-type domain. The H-T-H motif DNA-binding region spans isoleucine 4 to serine 23.

In terms of biological role, transcriptional repressor of the malA gene for maltase. The sequence is that of HTH-type transcriptional regulator MalR (malR) from Staphylococcus xylosus.